The following is a 164-amino-acid chain: B-phycoerythrin alpha chain (164 aa).

Residues cysteine 82 and cysteine 139 each contribute to the (2R,3E)-phycoerythrobilin site.

This sequence belongs to the phycobiliprotein family. As to quaternary structure, heteromer of 6 alpha, 6 beta and one gamma chain. Post-translationally, contains two covalently linked bilin chromophores.

It localises to the plastid. Its subcellular location is the chloroplast thylakoid membrane. Its function is as follows. Light-harvesting photosynthetic bile pigment-protein from the phycobiliprotein complex. The protein is B-phycoerythrin alpha chain (cpeA) of Porphyridium purpureum (Red alga).